Reading from the N-terminus, the 1293-residue chain is Phosphoribosylformylglycinamidine synthase (1293 aa).

Residues 305 to 316 (GAATGSGGEIRD) and Ala-676 contribute to the ATP site. The interval 305–327 (GAATGSGGEIRDEGATGRGSKPK) is disordered. Mg(2+) is bound by residues Asp-677, Glu-716, Asn-720, and Asp-884. Ser-886 contributes to the ATP binding site. The 254-residue stretch at 1040–1293 (MAILREQGVN…MFRNARVNLG (254 aa)) folds into the Glutamine amidotransferase type-1 domain. The active-site Nucleophile is Cys-1133. Active-site residues include His-1258 and Glu-1260.

This sequence in the N-terminal section; belongs to the FGAMS family. As to quaternary structure, monomer.

The protein localises to the cytoplasm. The catalysed reaction is N(2)-formyl-N(1)-(5-phospho-beta-D-ribosyl)glycinamide + L-glutamine + ATP + H2O = 2-formamido-N(1)-(5-O-phospho-beta-D-ribosyl)acetamidine + L-glutamate + ADP + phosphate + H(+). The protein operates within purine metabolism; IMP biosynthesis via de novo pathway; 5-amino-1-(5-phospho-D-ribosyl)imidazole from N(2)-formyl-N(1)-(5-phospho-D-ribosyl)glycinamide: step 1/2. Functionally, phosphoribosylformylglycinamidine synthase involved in the purines biosynthetic pathway. Catalyzes the ATP-dependent conversion of formylglycinamide ribonucleotide (FGAR) and glutamine to yield formylglycinamidine ribonucleotide (FGAM) and glutamate. The chain is Phosphoribosylformylglycinamidine synthase from Shewanella oneidensis (strain ATCC 700550 / JCM 31522 / CIP 106686 / LMG 19005 / NCIMB 14063 / MR-1).